The primary structure comprises 211 residues: Adenylate kinase (211 aa).

10–15 lines the ATP pocket; that stretch reads GSGKGT. Residues 30 to 59 form an NMP region; it reads STGDMLRAEVSKKSPLGLKAEEYMKQGLLV. Residues Thr31, Arg36, 57–59, 84–87, and Gln91 contribute to the AMP site; these read LLV and GFPR. Residues 125 to 162 are LID; sequence GRRVCPKCGATYNIYYQKPKNDTLCDNDATPLIQRDDD. Arg126 provides a ligand contact to ATP. Cys129 and Cys132 together coordinate Zn(2+). An ATP-binding site is contributed by 135–136; that stretch reads TY. Residues Cys149 and Asp152 each coordinate Zn(2+). Arg159 and Arg170 together coordinate AMP. Gly198 is a binding site for ATP.

It belongs to the adenylate kinase family. In terms of assembly, monomer.

It is found in the cytoplasm. The catalysed reaction is AMP + ATP = 2 ADP. Its pathway is purine metabolism; AMP biosynthesis via salvage pathway; AMP from ADP: step 1/1. Its function is as follows. Catalyzes the reversible transfer of the terminal phosphate group between ATP and AMP. Plays an important role in cellular energy homeostasis and in adenine nucleotide metabolism. This is Adenylate kinase from Hydrogenobaculum sp. (strain Y04AAS1).